The sequence spans 285 residues: Phosphatase YwpJ (285 aa).

Asp7 functions as the Nucleophile in the catalytic mechanism. Position 7 (Asp7) interacts with Mg(2+). Leu8 is a binding site for phosphate. Residue Asp9 participates in Mg(2+) binding. Phosphate contacts are provided by residues 41 to 42 and Lys214; that span reads TG. Residues Asp237 and Ser238 each contribute to the Mg(2+) site. Phosphate contacts are provided by residues Asn240 and 282-283; that span reads KH.

Belongs to the HAD-like hydrolase superfamily. Cof family. It depends on Mg(2+) as a cofactor.

Catalyzes the dephosphorylation of phosphorylated 5-6 carbon sugars and monophosphate nucleotides (NMP) in vitro. To a lesser extent, dephosphorylates flavin mononucleotide (FMN) in vitro. The polypeptide is Phosphatase YwpJ (ywpJ) (Bacillus subtilis (strain 168)).